Consider the following 974-residue polypeptide: Coiled-coil domain-containing protein 146 (974 aa).

Residues 1–44 (MEDRSKYIAEESEDEEDEEQEEKEKKGGASTSTETEEDQEDIPS) form a disordered region. Over residues 10 to 21 (EESEDEEDEEQE) the composition is skewed to acidic residues. At serine 12 the chain carries Phosphoserine. 6 coiled-coil regions span residues 105-160 (VQLL…QERE), 195-340 (KLLK…TKEN), 421-474 (LPEQ…REVL), 512-660 (KKLE…NESG), 687-712 (QDIE…QRQI), and 767-848 (LTEE…ELSM).

In terms of assembly, interacts with CCDC38 and CCDC42. Interacts with intraflagellar transport proteins IFT20 and IFT88.

The protein localises to the cytoplasm. It is found in the cytoskeleton. It localises to the microtubule organizing center. Its subcellular location is the centrosome. The protein resides in the centriole. The protein localises to the cell projection. It is found in the cilium. It localises to the flagellum. Its subcellular location is the flagellum axoneme. The protein resides in the cilium basal body. The protein localises to the midbody. Functionally, essential for sperm flagellum biogenesis and male fertility. In Rattus norvegicus (Rat), this protein is Coiled-coil domain-containing protein 146 (Ccdc146).